The following is a 190-amino-acid chain: Shikimate kinase (190 aa).

Position 13 to 18 (13 to 18 (GAGKTT)) interacts with ATP. Thr-17 provides a ligand contact to Mg(2+). Residues Asp-35, Arg-59, and Gly-81 each coordinate substrate. Arg-119 is a binding site for ATP. Position 138 (Arg-138) interacts with substrate.

The protein belongs to the shikimate kinase family. In terms of assembly, monomer. Mg(2+) is required as a cofactor.

The protein localises to the cytoplasm. The catalysed reaction is shikimate + ATP = 3-phosphoshikimate + ADP + H(+). The protein operates within metabolic intermediate biosynthesis; chorismate biosynthesis; chorismate from D-erythrose 4-phosphate and phosphoenolpyruvate: step 5/7. In terms of biological role, catalyzes the specific phosphorylation of the 3-hydroxyl group of shikimic acid using ATP as a cosubstrate. In Ralstonia nicotianae (strain ATCC BAA-1114 / GMI1000) (Ralstonia solanacearum), this protein is Shikimate kinase.